The following is a 287-amino-acid chain: ATP synthase gamma chain (287 aa).

The protein belongs to the ATPase gamma chain family. F-type ATPases have 2 components, CF(1) - the catalytic core - and CF(0) - the membrane proton channel. CF(1) has five subunits: alpha(3), beta(3), gamma(1), delta(1), epsilon(1). CF(0) has three main subunits: a, b and c.

It is found in the cell inner membrane. Functionally, produces ATP from ADP in the presence of a proton gradient across the membrane. The gamma chain is believed to be important in regulating ATPase activity and the flow of protons through the CF(0) complex. This is ATP synthase gamma chain from Xylella fastidiosa (strain M23).